We begin with the raw amino-acid sequence, 581 residues long: Protein GAMETOPHYTE DEFECTIVE 1 (581 aa).

Residues 452–467 show a composition bias toward polar residues; it reads SMNIESTSEGGSMSPS. A disordered region spans residues 452–512; that stretch reads SMNIESTSEG…TTGHASNDEM (61 aa). A compositionally biased stretch (basic and acidic residues) spans 496–512; sequence ENSKERATTGHASNDEM.

It belongs to the eukaryotic/archaeal RNase P protein component 3 family. In terms of assembly, probable component of nuclear RNase P and RNase MRP ribonucleoproteins. Interacts with POP5. Mostly expressed in inflorescence and roots, to a lower extent in leaves, and, at low levels, in siliques, seedlings and stems.

The protein resides in the nucleus. The protein localises to the nucleolus. It is found in the mitochondrion. Its function is as follows. Probable component of ribonuclease P, a ribonucleoprotein complex that generates mature tRNA molecules by cleaving their 5'-ends. May also be a component of the MRP ribonuclease complex, which cleaves pre-rRNA sequences. Required for female gametophyte development and male competence. This is Protein GAMETOPHYTE DEFECTIVE 1 from Arabidopsis thaliana (Mouse-ear cress).